Consider the following 485-residue polypeptide: MTSQYVTEPPSSGLVDLVTSKGTISIALFPTQAPLACRNFLTLALEGFYDNLVFHRLIPNFILQTGDPSATGTGGESIYGEPFPIESHSRLKFNRRGLLGMAANQDRTNESQFFLTLDATPELTGKHTLMGKVEGKSIYTLVELVEGVELVDGDRPRYPIKLHEVRVVENPFDDLQPRTTKKQRIAEERRKKHEMETRVAEEQKRKRSKAKKNTGLLSFGAEEEAEDEVALKGPKSSHDLLKDDKHLSRQTIETSKSTKANTPAVSANISSKEKRFLAQSSSSTTPPAVTKQASKDGTSDAPHPTATLKSEHSGPSDQKASSSTGRDFLASQRAKYLSSSHPSTAKQDDSYSALLSFQSRLRTRPSSTTPIAKPLPSVGVDEVEEEAGEYGASDDDDDWRSHRLDAGGQPLVAGQNAGKDTLEDYEVLDPRDHTDRERNPKAESSRDGKRGRDWVEHDRKYQNDRSRRHREHDKHPQQRRQRSII.

Residues 11–167 (SSGLVDLVTS…YPIKLHEVRV (157 aa)) form the PPIase cyclophilin-type domain. The interval 173–485 (DDLQPRTTKK…PQQRRQRSII (313 aa)) is disordered. Basic and acidic residues-rich tracts occupy residues 184-204 (RIAEERRKKHEMETRVAEEQK) and 236-247 (SSHDLLKDDKHL). Composition is skewed to polar residues over residues 249–270 (RQTIETSKSTKANTPAVSANIS), 278–292 (AQSSSSTTPPAVTKQ), 315–325 (PSDQKASSSTG), and 353–370 (ALLSFQSRLRTRPSSTTP). Residues 381 to 398 (DEVEEEAGEYGASDDDDD) are compositionally biased toward acidic residues. Positions 428–465 (LDPRDHTDRERNPKAESSRDGKRGRDWVEHDRKYQNDR) are enriched in basic and acidic residues. Positions 466-485 (SRRHREHDKHPQQRRQRSII) are enriched in basic residues.

Belongs to the cyclophilin-type PPIase family. CWC27 subfamily. Associated with the spliceosome.

It is found in the cytoplasm. Its subcellular location is the nucleus. The catalysed reaction is [protein]-peptidylproline (omega=180) = [protein]-peptidylproline (omega=0). Functionally, PPIases accelerate the folding of proteins. It catalyzes the cis-trans isomerization of proline imidic peptide bonds in oligopeptides. Involved in pre-mRNA splicing. This is Peptidyl-prolyl isomerase CWC27 (CWC27) from Mycosarcoma maydis (Corn smut fungus).